We begin with the raw amino-acid sequence, 156 residues long: Small ribosomal subunit protein uS7 (156 aa).

The protein belongs to the universal ribosomal protein uS7 family. Part of the 30S ribosomal subunit. Contacts proteins S9 and S11.

One of the primary rRNA binding proteins, it binds directly to 16S rRNA where it nucleates assembly of the head domain of the 30S subunit. Is located at the subunit interface close to the decoding center, probably blocks exit of the E-site tRNA. This chain is Small ribosomal subunit protein uS7 (rpsG), found in Geobacillus stearothermophilus (Bacillus stearothermophilus).